The sequence spans 147 residues: Basic phospholipase A2 beta-bungarotoxin A1 chain (147 aa).

An N-terminal signal peptide occupies residues M1 to A19. Positions A20–L27 are excised as a propeptide. Intrachain disulfides connect C54–C146, C56–C72, C71–C127, C78–C120, C88–C113, and C106–C118. Ca(2+)-binding residues include Y55, G57, and G59. Residue H75 is part of the active site. Residue D76 participates in Ca(2+) binding. The active site involves D121.

The protein belongs to the phospholipase A2 family. Group I subfamily. D49 sub-subfamily. In terms of assembly, heterodimer; disulfide-linked. The A chains have phospholipase A2 activity and the B chains show homology with the basic protease inhibitors. The A1 chain is found in beta-1 and beta-2 bungarotoxins. Ca(2+) serves as cofactor. Expressed by the venom gland.

Its subcellular location is the secreted. The catalysed reaction is a 1,2-diacyl-sn-glycero-3-phosphocholine + H2O = a 1-acyl-sn-glycero-3-phosphocholine + a fatty acid + H(+). Functionally, snake venom phospholipase A2 (PLA2) that inhibits neuromuscular transmission by blocking acetylcholine release from the nerve termini. PLA2 catalyzes the calcium-dependent hydrolysis of the 2-acyl groups in 3-sn-phosphoglycerides. The chain is Basic phospholipase A2 beta-bungarotoxin A1 chain from Bungarus multicinctus (Many-banded krait).